We begin with the raw amino-acid sequence, 349 residues long: Fructose-bisphosphate aldolase 2, chloroplastic (349 aa).

Residues arginine 47 and lysine 137 each coordinate substrate. Glutamate 177 (proton acceptor) is an active-site residue. Lysine 219 (schiff-base intermediate with dihydroxyacetone-P) is an active-site residue.

The protein belongs to the class I fructose-bisphosphate aldolase family.

The protein localises to the plastid. It localises to the chloroplast. The catalysed reaction is beta-D-fructose 1,6-bisphosphate = D-glyceraldehyde 3-phosphate + dihydroxyacetone phosphate. It functions in the pathway carbohydrate degradation; glycolysis; D-glyceraldehyde 3-phosphate and glycerone phosphate from D-glucose: step 4/4. This is Fructose-bisphosphate aldolase 2, chloroplastic from Pisum sativum (Garden pea).